A 345-amino-acid polypeptide reads, in one-letter code: Eukaryotic translation initiation factor 3 subunit F (345 aa).

The MPN domain occupies 30–166 (VVIQPQAIFS…TRAYISAPVG (137 aa)). The interval 308-345 (GGESGGAESGAQRGQRGGKGGRGGQQRNQERGAEEARA) is disordered. A compositionally biased stretch (gly residues) spans 322-331 (QRGGKGGRGG). Residues 335-345 (NQERGAEEARA) are compositionally biased toward basic and acidic residues.

The protein belongs to the eIF-3 subunit F family. As to quaternary structure, component of the eukaryotic translation initiation factor 3 (eIF-3) complex.

Its subcellular location is the cytoplasm. Component of the eukaryotic translation initiation factor 3 (eIF-3) complex, which is involved in protein synthesis of a specialized repertoire of mRNAs and, together with other initiation factors, stimulates binding of mRNA and methionyl-tRNAi to the 40S ribosome. The eIF-3 complex specifically targets and initiates translation of a subset of mRNAs involved in cell proliferation. This is Eukaryotic translation initiation factor 3 subunit F from Aspergillus clavatus (strain ATCC 1007 / CBS 513.65 / DSM 816 / NCTC 3887 / NRRL 1 / QM 1276 / 107).